Here is a 262-residue protein sequence, read N- to C-terminus: ATP synthase subunit a (262 aa).

Helical transmembrane passes span 25–45 (NVHI…LAVF), 86–106 (VAPL…IDLI), 130–150 (DISA…FYTV), 204–226 (LIFI…GIPL), and 240–260 (LQAF…YNKA).

Belongs to the ATPase A chain family. In terms of assembly, F-type ATPases have 2 components, CF(1) - the catalytic core - and CF(0) - the membrane proton channel. CF(1) has five subunits: alpha(3), beta(3), gamma(1), delta(1), epsilon(1). CF(0) has three main subunits: a(1), b(2) and c(9-12). The alpha and beta chains form an alternating ring which encloses part of the gamma chain. CF(1) is attached to CF(0) by a central stalk formed by the gamma and epsilon chains, while a peripheral stalk is formed by the delta and b chains.

Its subcellular location is the cell inner membrane. Functionally, key component of the proton channel; it plays a direct role in the translocation of protons across the membrane. In Mannheimia succiniciproducens (strain KCTC 0769BP / MBEL55E), this protein is ATP synthase subunit a.